Consider the following 396-residue polypeptide: Alpha-galactosidase 2 (396 aa).

The signal sequence occupies residues 1–25 (MVLLSFSLRFIAFTLTITLTQIADG). Intrachain disulfides connect C52-C84 and C132-C163. An N-linked (GlcNAc...) asparagine glycan is attached at N55. Residues 82–83 (DD) and K159 each bind substrate. The active-site Nucleophile is D161. Residues 194 to 198 (EWGQE), R212, and D216 each bind substrate. The active-site Proton donor is D216. 2 N-linked (GlcNAc...) asparagine glycosylation sites follow: N343 and N354.

This sequence belongs to the glycosyl hydrolase 27 family. As to quaternary structure, homodimer.

It localises to the secreted. It is found in the cell wall. The protein resides in the extracellular space. Its subcellular location is the apoplast. It carries out the reaction Hydrolysis of terminal, non-reducing alpha-D-galactose residues in alpha-D-galactosides, including galactose oligosaccharides, galactomannans and galactolipids.. In terms of biological role, may regulate leaf (and possibly other organ) development by functioning in cell wall loosening and cell wall expansion. This chain is Alpha-galactosidase 2, found in Arabidopsis thaliana (Mouse-ear cress).